A 161-amino-acid chain; its full sequence is Shikimate kinase (161 aa).

10-15 (GAGKTT) contributes to the ATP binding site. T14 provides a ligand contact to Mg(2+). Residues D28, R52, and G74 each coordinate substrate. R114 is a binding site for ATP. Position 132 (R132) interacts with substrate.

Belongs to the shikimate kinase family. In terms of assembly, monomer. Mg(2+) serves as cofactor.

It is found in the cytoplasm. The catalysed reaction is shikimate + ATP = 3-phosphoshikimate + ADP + H(+). It functions in the pathway metabolic intermediate biosynthesis; chorismate biosynthesis; chorismate from D-erythrose 4-phosphate and phosphoenolpyruvate: step 5/7. Its function is as follows. Catalyzes the specific phosphorylation of the 3-hydroxyl group of shikimic acid using ATP as a cosubstrate. The protein is Shikimate kinase of Streptococcus gordonii (strain Challis / ATCC 35105 / BCRC 15272 / CH1 / DL1 / V288).